The following is a 215-amino-acid chain: Glutathione S-transferase F9 (215 aa).

The GST N-terminal domain occupies 2–81; it reads VLKVYGPHFA…YVAEKYRSQG (80 aa). 11 to 12 lines the glutathione pocket; that stretch reads AS. Ser12 carries the post-translational modification Phosphoserine. A Methionine sulfoxide modification is found at Met35. Glutathione-binding positions include 39-40, 52-53, and 65-66; these read HK, TV, and ES. The GST C-terminal domain occupies 88-215; that stretch reads TVEDRGQVEQ…ETVAKYSFPA (128 aa). Methionine sulfoxide occurs at positions 118, 123, and 184.

It belongs to the GST superfamily. Phi family. In terms of processing, oxidated at Met-35, Met-118, Met-123 and Met-184 in oxidative stress conditions (e.g. hydrogen peroxide H(2)O(2)).

Its subcellular location is the cytoplasm. The protein resides in the cytosol. The enzyme catalyses RX + glutathione = an S-substituted glutathione + a halide anion + H(+). With respect to regulation, redox-regulated enzyme; in oxidative stress conditions methionine oxidation ensure a thermodynamic and structural compensatory mechanism to guarantee H(2)O(2) peroxidase activity despite transferase activity inhibition. In terms of biological role, in vitro, possesses glutathione S-transferase activity toward 1-chloro-2,4-dinitrobenzene (CDNB) and benzyl isothiocyanate (BITC), and glutathione peroxidase activity toward cumene hydroperoxide and linoleic acid-13-hydroperoxide. May be involved in the conjugation of reduced glutathione to a wide number of exogenous and endogenous hydrophobic electrophiles and have a detoxification role against certain herbicides. The sequence is that of Glutathione S-transferase F9 from Arabidopsis thaliana (Mouse-ear cress).